The chain runs to 616 residues: Chaperone protein HscA (616 aa).

It belongs to the heat shock protein 70 family.

In terms of biological role, chaperone involved in the maturation of iron-sulfur cluster-containing proteins. Has a low intrinsic ATPase activity which is markedly stimulated by HscB. Involved in the maturation of IscU. This chain is Chaperone protein HscA, found in Salmonella agona (strain SL483).